We begin with the raw amino-acid sequence, 372 residues long: Queuine tRNA-ribosyltransferase (372 aa).

The active-site Proton acceptor is the Asp90. Residues 90 to 94, Asp144, Gln193, and Gly220 contribute to the substrate site; that span reads DSGGF. The RNA binding stretch occupies residues 251-257; sequence GVGTPED. Asp270 functions as the Nucleophile in the catalytic mechanism. Residues 275-279 form an RNA binding; important for wobble base 34 recognition region; it reads TRNAR. Zn(2+) is bound by residues Cys308, Cys310, Cys313, and His339.

Belongs to the queuine tRNA-ribosyltransferase family. Homodimer. Within each dimer, one monomer is responsible for RNA recognition and catalysis, while the other monomer binds to the replacement base PreQ1. Zn(2+) is required as a cofactor.

It carries out the reaction 7-aminomethyl-7-carbaguanine + guanosine(34) in tRNA = 7-aminomethyl-7-carbaguanosine(34) in tRNA + guanine. The protein operates within tRNA modification; tRNA-queuosine biosynthesis. In terms of biological role, catalyzes the base-exchange of a guanine (G) residue with the queuine precursor 7-aminomethyl-7-deazaguanine (PreQ1) at position 34 (anticodon wobble position) in tRNAs with GU(N) anticodons (tRNA-Asp, -Asn, -His and -Tyr). Catalysis occurs through a double-displacement mechanism. The nucleophile active site attacks the C1' of nucleotide 34 to detach the guanine base from the RNA, forming a covalent enzyme-RNA intermediate. The proton acceptor active site deprotonates the incoming PreQ1, allowing a nucleophilic attack on the C1' of the ribose to form the product. After dissociation, two additional enzymatic reactions on the tRNA convert PreQ1 to queuine (Q), resulting in the hypermodified nucleoside queuosine (7-(((4,5-cis-dihydroxy-2-cyclopenten-1-yl)amino)methyl)-7-deazaguanosine). The polypeptide is Queuine tRNA-ribosyltransferase (Sulfurimonas denitrificans (strain ATCC 33889 / DSM 1251) (Thiomicrospira denitrificans (strain ATCC 33889 / DSM 1251))).